A 336-amino-acid polypeptide reads, in one-letter code: Palmitoyltransferase PFA3 (336 aa).

Residues 1 to 6 (MNDRLS) are Cytoplasmic-facing. The chain crosses the membrane as a helical span at residues 7-29 (LTSLFPRCLTTCLYIWTAYITLT). Residues 30–37 (RIHQIPRW) lie on the Vacuolar side of the membrane. The helical transmembrane segment at 38-58 (FLALTIVPTLAVALYTYYKVI) threads the bilayer. Topologically, residues 59–147 (ARGPGSPLDF…AECTGFRNQK (89 aa)) are cytoplasmic. Residues 104–154 (RVCQVCHVWKPDRCHHCSSCDVCILKMDHHCPWFAECTGFRNQKFFIQFLM) enclose the DHHC domain. A helical transmembrane segment spans residues 148 to 168 (FFIQFLMYTTLYAFLVLIYTC). The Vacuolar segment spans residues 169 to 188 (YELGTWFNSGSFNRELIDFH). A helical membrane pass occupies residues 189-209 (LLGVALLAVAVFISVLAFTCF). The Cytoplasmic segment spans residues 210–336 (SIYQVCKNQT…RASVEIIDAN (127 aa)).

It belongs to the DHHC palmitoyltransferase family. PFA3 subfamily. Post-translationally, autopalmitoylated.

Its subcellular location is the vacuole membrane. The enzyme catalyses L-cysteinyl-[protein] + hexadecanoyl-CoA = S-hexadecanoyl-L-cysteinyl-[protein] + CoA. Functionally, palmitoyltransferase specific for VAC8. Palmitoylates VAC8 at one or more of its N-terminal cysteine residues, which is required for its proper membrane localization. This is Palmitoyltransferase PFA3 (PFA3) from Saccharomyces cerevisiae (strain ATCC 204508 / S288c) (Baker's yeast).